Here is a 499-residue protein sequence, read N- to C-terminus: Probable folate-biopterin transporter 2 (499 aa).

Transmembrane regions (helical) follow at residues 43-63 (WSFVFGVVSLYGINQGLGGSL), 92-112 (IPWIIKPLWGILTDVLPIFGF), 116-136 (PYFILAGVLGVVSLLFISLHS), 141-161 (YLALFWMTISSAAMAIADVTI), 185-205 (LSSSIGALLGFFMSGILVHLV), 209-229 (GVFGLLTFPFALVSVVGIVFS), 266-286 (LYMYISLTLGLNIHEGLFYWF), 302-322 (FILSIGSIGSILAATLYQLVL), 330-350 (LCLWTQLLFALSGMLDLILVF), 354-374 (LKFGLPDYLFIVVDEIVSQMI), 399-419 (FALLMSIDNAGLMTSSWLGGI), and 435-455 (WLAVLVRNVMRLLPLCFLFLV).

The protein belongs to the major facilitator superfamily. Folate-biopterin transporter (TC 2.A.71) family.

The protein localises to the membrane. Its function is as follows. Could mediate folate transport. The sequence is that of Probable folate-biopterin transporter 2 from Arabidopsis thaliana (Mouse-ear cress).